Consider the following 353-residue polypeptide: Photosystem II D2 protein (353 aa).

Thr2 carries the post-translational modification N-acetylthreonine. Thr2 is subject to Phosphothreonine. Residues 41 to 61 (CAYFALGGWFTGTTFVTSWYT) traverse the membrane as a helical segment. His118 lines the chlorophyll a pocket. The helical transmembrane segment at 125 to 141 (GFMLRQFELARSVQLRP) threads the bilayer. Residues Gln130 and Asn143 each contribute to the pheophytin a site. The chain crosses the membrane as a helical span at residues 153–166 (VFVSVFLIYPLGQS). His198 is a binding site for chlorophyll a. Residues 208–228 (AALLCAIHGATVENTLFEDGD) form a helical membrane-spanning segment. 2 residues coordinate a plastoquinone: His215 and Phe262. His215 is a binding site for Fe cation. His269 contacts Fe cation. A helical transmembrane segment spans residues 279 to 295 (GLWMSAIGVVGLALNLR).

The protein belongs to the reaction center PufL/M/PsbA/D family. In terms of assembly, PSII is composed of 1 copy each of membrane proteins PsbA, PsbB, PsbC, PsbD, PsbE, PsbF, PsbH, PsbI, PsbJ, PsbK, PsbL, PsbM, PsbT, PsbX, PsbY, PsbZ, Psb30/Ycf12, at least 3 peripheral proteins of the oxygen-evolving complex and a large number of cofactors. It forms dimeric complexes. The D1/D2 heterodimer binds P680, chlorophylls that are the primary electron donor of PSII, and subsequent electron acceptors. It shares a non-heme iron and each subunit binds pheophytin, quinone, additional chlorophylls, carotenoids and lipids. There is also a Cl(-1) ion associated with D1 and D2, which is required for oxygen evolution. The PSII complex binds additional chlorophylls, carotenoids and specific lipids. serves as cofactor.

It localises to the plastid. It is found in the chloroplast thylakoid membrane. The enzyme catalyses 2 a plastoquinone + 4 hnu + 2 H2O = 2 a plastoquinol + O2. Photosystem II (PSII) is a light-driven water:plastoquinone oxidoreductase that uses light energy to abstract electrons from H(2)O, generating O(2) and a proton gradient subsequently used for ATP formation. It consists of a core antenna complex that captures photons, and an electron transfer chain that converts photonic excitation into a charge separation. The D1/D2 (PsbA/PsbD) reaction center heterodimer binds P680, the primary electron donor of PSII as well as several subsequent electron acceptors. D2 is needed for assembly of a stable PSII complex. The polypeptide is Photosystem II D2 protein (Liriodendron tulipifera (Tuliptree)).